A 203-amino-acid polypeptide reads, in one-letter code: Endo-type membrane-bound lytic murein transglycosylase A (203 aa).

Positions 1 to 15 (MKLRWFAFLVVLLAG) are cleaved as a signal peptide. A lipid anchor (N-palmitoyl cysteine) is attached at Cys16. Cys16 is lipidated: S-diacylglycerol cysteine.

Belongs to the transglycosylase Slt family.

The protein resides in the cell outer membrane. The catalysed reaction is Endolytic cleavage of the (1-&gt;4)-beta-glycosidic linkage between N-acetylmuramic acid (MurNAc) and N-acetylglucosamine (GlcNAc) residues in peptidoglycan with concomitant formation of a 1,6-anhydrobond in the MurNAc residue.. In terms of biological role, murein-degrading enzyme. May play a role in recycling of muropeptides during cell elongation and/or cell division. Preferentially cleaves at a distance of more than two disaccharide units from the ends of the glycan chain. The chain is Endo-type membrane-bound lytic murein transglycosylase A from Citrobacter koseri (strain ATCC BAA-895 / CDC 4225-83 / SGSC4696).